The following is a 265-amino-acid chain: Mycothiol acetyltransferase (265 aa).

2 consecutive N-acetyltransferase domains span residues 1–110 (MDDL…PPLP) and 118–265 (VSVR…YVRG). 1D-myo-inositol 2-(L-cysteinylamino)-2-deoxy-alpha-D-glucopyranoside is bound at residue aspartate 3. Acetyl-CoA is bound at residue 44–46 (VQV). Glutamate 145, arginine 185, and glutamate 198 together coordinate 1D-myo-inositol 2-(L-cysteinylamino)-2-deoxy-alpha-D-glucopyranoside. Acetyl-CoA contacts are provided by residues 202 to 204 (LGV) and 209 to 215 (HCKGLGK). Tyrosine 236 provides a ligand contact to 1D-myo-inositol 2-(L-cysteinylamino)-2-deoxy-alpha-D-glucopyranoside.

It belongs to the acetyltransferase family. MshD subfamily. As to quaternary structure, monomer.

The catalysed reaction is 1D-myo-inositol 2-(L-cysteinylamino)-2-deoxy-alpha-D-glucopyranoside + acetyl-CoA = mycothiol + CoA + H(+). Catalyzes the transfer of acetyl from acetyl-CoA to desacetylmycothiol (Cys-GlcN-Ins) to form mycothiol. This chain is Mycothiol acetyltransferase, found in Segniliparus rotundus (strain ATCC BAA-972 / CDC 1076 / CIP 108378 / DSM 44985 / JCM 13578).